The primary structure comprises 117 residues: DNA-directed RNA polymerase subunit omega (117 aa).

Belongs to the RNA polymerase subunit omega family. The RNAP catalytic core consists of 2 alpha, 1 beta, 1 beta' and 1 omega subunit. When a sigma factor is associated with the core the holoenzyme is formed, which can initiate transcription.

The enzyme catalyses RNA(n) + a ribonucleoside 5'-triphosphate = RNA(n+1) + diphosphate. In terms of biological role, promotes RNA polymerase assembly. Latches the N- and C-terminal regions of the beta' subunit thereby facilitating its interaction with the beta and alpha subunits. In Roseobacter denitrificans (strain ATCC 33942 / OCh 114) (Erythrobacter sp. (strain OCh 114)), this protein is DNA-directed RNA polymerase subunit omega.